Consider the following 233-residue polypeptide: 7-cyano-7-deazaguanine synthase 2 (233 aa).

ATP is bound at residue 8 to 18; it reads LSGGLDSTTCM. Cys186, Cys194, Cys197, and Cys200 together coordinate Zn(2+).

Belongs to the QueC family. Homodimer. The cofactor is Zn(2+).

The catalysed reaction is 7-carboxy-7-deazaguanine + NH4(+) + ATP = 7-cyano-7-deazaguanine + ADP + phosphate + H2O + H(+). It functions in the pathway purine metabolism; 7-cyano-7-deazaguanine biosynthesis. Catalyzes the ATP-dependent conversion of 7-carboxy-7-deazaguanine (CDG) to 7-cyano-7-deazaguanine (preQ(0)). The chain is 7-cyano-7-deazaguanine synthase 2 from Desulfitobacterium hafniense (strain Y51).